Here is a 261-residue protein sequence, read N- to C-terminus: 1-(5-phosphoribosyl)-5-[(5-phosphoribosylamino)methylideneamino] imidazole-4-carboxamide isomerase (261 aa).

Residue Asp8 is the Proton acceptor of the active site. The Proton donor role is filled by Asp130.

This sequence belongs to the HisA/HisF family.

It localises to the cytoplasm. The catalysed reaction is 1-(5-phospho-beta-D-ribosyl)-5-[(5-phospho-beta-D-ribosylamino)methylideneamino]imidazole-4-carboxamide = 5-[(5-phospho-1-deoxy-D-ribulos-1-ylimino)methylamino]-1-(5-phospho-beta-D-ribosyl)imidazole-4-carboxamide. It participates in amino-acid biosynthesis; L-histidine biosynthesis; L-histidine from 5-phospho-alpha-D-ribose 1-diphosphate: step 4/9. The chain is 1-(5-phosphoribosyl)-5-[(5-phosphoribosylamino)methylideneamino] imidazole-4-carboxamide isomerase from Prosthecochloris aestuarii (strain DSM 271 / SK 413).